A 65-amino-acid chain; its full sequence is Hainantoxin-X.3 (65 aa).

A signal peptide spans 1–20; that stretch reads MNMKILVLVAVLCLVVSTHA. Residues 21-37 constitute a propeptide that is removed on maturation; sequence ERHSKTDMGDSPMIQER. Intrachain disulfides connect Cys-39/Cys-56, Cys-46/Cys-59, and Cys-55/Cys-64.

The protein belongs to the neurotoxin 36 family. 02 subfamily. Expressed by the venom gland.

The protein localises to the secreted. Functionally, reversibly blocks N-type calcium channels (Cav2.2/CACNA1B) in rat dorsal root ganglion cells. Elicits no toxic symptoms in either vertebrates or invertebrates during a period of 48 hours post-injection, when it was assayed in vivo by direct injection into mice and cockroaches. This Cyriopagopus hainanus (Chinese bird spider) protein is Hainantoxin-X.3.